The sequence spans 200 residues: Recombination protein RecR (200 aa).

Residues 60-75 (CVYCQALTEDDVCNIC) form a C4-type zinc finger. The region spanning 83–177 (TKLCIIESML…KISRIGFGVP (95 aa)) is the Toprim domain.

It belongs to the RecR family.

In terms of biological role, may play a role in DNA repair. It seems to be involved in an RecBC-independent recombinational process of DNA repair. It may act with RecF and RecO. The sequence is that of Recombination protein RecR from Francisella tularensis subsp. novicida (strain U112).